The sequence spans 210 residues: Protein GrpE (210 aa).

The tract at residues methionine 1–leucine 71 is disordered. Residues threonine 11 to glutamine 23 show a composition bias toward acidic residues. The span at asparagine 24 to threonine 35 shows a compositional bias: polar residues. A compositionally biased stretch (low complexity) spans aspartate 36–glutamate 46. A compositionally biased stretch (acidic residues) spans asparagine 47–serine 60. Positions glutamine 61 to leucine 71 are enriched in basic and acidic residues.

It belongs to the GrpE family. As to quaternary structure, homodimer.

The protein localises to the cytoplasm. Its function is as follows. Participates actively in the response to hyperosmotic and heat shock by preventing the aggregation of stress-denatured proteins, in association with DnaK and GrpE. It is the nucleotide exchange factor for DnaK and may function as a thermosensor. Unfolded proteins bind initially to DnaJ; upon interaction with the DnaJ-bound protein, DnaK hydrolyzes its bound ATP, resulting in the formation of a stable complex. GrpE releases ADP from DnaK; ATP binding to DnaK triggers the release of the substrate protein, thus completing the reaction cycle. Several rounds of ATP-dependent interactions between DnaJ, DnaK and GrpE are required for fully efficient folding. The protein is Protein GrpE of Staphylococcus epidermidis (strain ATCC 35984 / DSM 28319 / BCRC 17069 / CCUG 31568 / BM 3577 / RP62A).